The following is a 490-amino-acid chain: Metal cation symporter ZIP14 (490 aa).

An N-terminal signal peptide occupies residues 1–28; the sequence is MELLRPALPSYFLLTLLSIWTAASEARA. Over 29–155 the chain is Extracellular; that stretch reads VSTGMPTISA…PSSVEVWGYG (127 aa). Asn-75, Asn-85, and Asn-100 each carry an N-linked (GlcNAc...) asparagine glycan. The segment at 127–146 is disordered; it reads ACSSENQENEENEQTEEGRP. The helical transmembrane segment at 156–176 threads the bilayer; it reads LLCVTVISLCSLLGASVVPFM. The Cytoplasmic portion of the chain corresponds to 177–184; it reads KKTFYKRL. Residues 185–205 form a helical membrane-spanning segment; that stretch reads LLYFIALAIGTLYSNALFQLI. At 206–222 the chain is on the extracellular side; that stretch reads PEAFGFNPMEDYYVSKS. Residues 223–243 traverse the membrane as a helical segment; that stretch reads AVVFGGFYLFFFTEKILKMLL. Residues 244–395 are Cytoplasmic-facing; that stretch reads KQKNEHHHGH…LLNAGMSLQQ (152 aa). The short motif at 249-256 is the HHHGHXHX-motif element; it reads HHHGHSHY. An XEXPHE-motif motif is present at residues 374–379; sequence EEFPHE. A helical transmembrane segment spans residues 396 to 416; the sequence is ALFFNFLSACCCYVGLGFGIL. Residues 417-422 are Extracellular-facing; the sequence is AGSHFS. Residues 423–443 traverse the membrane as a helical segment; it reads ANWIFALAGGMFLYISLADMF. Topologically, residues 444–459 are cytoplasmic; sequence PEMNEVSQEDERKGSA. The helical transmembrane segment at 460-480 threads the bilayer; the sequence is LIPFVIQNLGLLTGFGIMLVL. The Extracellular segment spans residues 481 to 490; it reads TMYSGHIQIG.

It belongs to the ZIP transporter (TC 2.A.5) family. Homotrimer. In terms of processing, ubiquitinated. Ubiquitination occurs upon iron depletion. The ubiquitinated form undergoes proteasomal degradation. N-glycosylated. N-glycosylation at Asn-100 is required for iron-regulated extraction of the transporter from membranes and subsequent proteasomal degradation.

The protein localises to the cell membrane. Its subcellular location is the apical cell membrane. It is found in the basolateral cell membrane. It localises to the early endosome membrane. The protein resides in the late endosome membrane. The protein localises to the lysosome membrane. It carries out the reaction Zn(2+)(out) + 2 hydrogencarbonate(out) = Zn(2+)(in) + 2 hydrogencarbonate(in). The enzyme catalyses Mn(2+)(out) + 2 hydrogencarbonate(out) = Mn(2+)(in) + 2 hydrogencarbonate(in). It catalyses the reaction Fe(2+)(out) + 2 hydrogencarbonate(out) = Fe(2+)(in) + 2 hydrogencarbonate(in). The catalysed reaction is Cd(2+)(out) + 2 hydrogencarbonate(out) = Cd(2+)(in) + 2 hydrogencarbonate(in). Functionally, electroneutral transporter of the plasma membrane mediating the cellular uptake of the divalent metal cations zinc, manganese and iron that are important for tissue homeostasis, metabolism, development and immunity. Functions as an energy-dependent symporter, transporting through the membranes an electroneutral complex composed of a divalent metal cation and two bicarbonate anions. Beside these endogenous cellular substrates, can also import cadmium a non-essential metal which is cytotoxic and carcinogenic. In Bos taurus (Bovine), this protein is Metal cation symporter ZIP14.